The primary structure comprises 319 residues: 33 kDa chaperonin (319 aa).

A compositionally biased stretch (basic and acidic residues) spans 1–10; it reads MTDASGSERL. Residues 1–25 are disordered; sequence MTDASGSERLKRAKGISEGTPSSLP. 2 disulfide bridges follow: C261–C263 and C294–C297.

Belongs to the HSP33 family. In terms of processing, under oxidizing conditions two disulfide bonds are formed involving the reactive cysteines. Under reducing conditions zinc is bound to the reactive cysteines and the protein is inactive.

It is found in the cytoplasm. In terms of biological role, redox regulated molecular chaperone. Protects both thermally unfolding and oxidatively damaged proteins from irreversible aggregation. Plays an important role in the bacterial defense system toward oxidative stress. This Synechococcus sp. (strain JA-2-3B'a(2-13)) (Cyanobacteria bacterium Yellowstone B-Prime) protein is 33 kDa chaperonin.